The primary structure comprises 196 residues: ATP-dependent Clp protease proteolytic subunit (196 aa).

The Nucleophile role is filled by S101. H126 is a catalytic residue.

The protein belongs to the peptidase S14 family. Component of the chloroplastic Clp protease core complex.

Its subcellular location is the plastid. It is found in the chloroplast stroma. It carries out the reaction Hydrolysis of proteins to small peptides in the presence of ATP and magnesium. alpha-casein is the usual test substrate. In the absence of ATP, only oligopeptides shorter than five residues are hydrolyzed (such as succinyl-Leu-Tyr-|-NHMec, and Leu-Tyr-Leu-|-Tyr-Trp, in which cleavage of the -Tyr-|-Leu- and -Tyr-|-Trp bonds also occurs).. In terms of biological role, cleaves peptides in various proteins in a process that requires ATP hydrolysis. Has a chymotrypsin-like activity. Plays a major role in the degradation of misfolded proteins. In Atropa belladonna (Belladonna), this protein is ATP-dependent Clp protease proteolytic subunit.